We begin with the raw amino-acid sequence, 560 residues long: Thermosome subunit alpha (560 aa).

Residues 535 to 547 are compositionally biased toward basic and acidic residues; the sequence is SEKKGGEGSKEES. Positions 535–560 are disordered; it reads SEKKGGEGSKEESGGEGGAGTPSLGD.

Belongs to the TCP-1 chaperonin family. In terms of assembly, forms a heterooligomeric complex of two stacked nine-membered rings; one of alpha and the other of beta subunits. Sometimes called a 'rosettasome'.

The protein resides in the cytoplasm. It carries out the reaction ATP + H2O = ADP + phosphate + H(+). Functionally, molecular chaperone; binds unfolded polypeptides in vitro, stimulates protein folding and has ATPase activity. One of the most abundant proteins in the cell at all temperatures. The chain is Thermosome subunit alpha (thsA) from Saccharolobus shibatae (strain ATCC 51178 / DSM 5389 / JCM 8931 / NBRC 15437 / B12) (Sulfolobus shibatae).